The primary structure comprises 151 residues: MTTKPSDSVSWFQVLQRGQHYMKTWPADKRLAPVFPENRVATATRFGIRFMPPLAIFTLTWQIALGGQLGPAIATALFACGLPLQGLWWLGKRAITPLPPTLLQWFHEVRNKLAEAGQAVAPVEQTPTYQSLADVLKRAFKQLDKTFLDDL.

2 helical membrane passes run 46–66 (FGIR…IALG) and 69–89 (LGPA…GLWW).

Belongs to the UPF0208 family.

It is found in the cell inner membrane. This chain is UPF0208 membrane protein YE1335, found in Yersinia enterocolitica serotype O:8 / biotype 1B (strain NCTC 13174 / 8081).